We begin with the raw amino-acid sequence, 424 residues long: 23S rRNA (uracil(1939)-C(5))-methyltransferase RlmD (424 aa).

In terms of domain architecture, TRAM spans 1–56; that stretch reads MEKFPAVTVFDLDYQGRGVAKIDGQVVFIEGALPDETVTFCKTSAKKQFIEAVVDE. The [4Fe-4S] cluster site is built by Cys69, Cys75, Cys78, and Cys155. Gln255, Phe284, Asn289, Glu305, Asp333, and Asp354 together coordinate S-adenosyl-L-methionine. Cys380 serves as the catalytic Nucleophile.

It belongs to the class I-like SAM-binding methyltransferase superfamily. RNA M5U methyltransferase family. RlmD subfamily.

It catalyses the reaction uridine(1939) in 23S rRNA + S-adenosyl-L-methionine = 5-methyluridine(1939) in 23S rRNA + S-adenosyl-L-homocysteine + H(+). Catalyzes the formation of 5-methyl-uridine at position 1939 (m5U1939) in 23S rRNA. This Dichelobacter nodosus (strain VCS1703A) protein is 23S rRNA (uracil(1939)-C(5))-methyltransferase RlmD.